A 175-amino-acid polypeptide reads, in one-letter code: NADH-ubiquinone oxidoreductase chain 6 (175 aa).

5 consecutive transmembrane segments (helical) span residues 1-21, 25-45, 47-67, 88-108, and 149-169; these read MMIY…VGFS, SPIY…GIVM, FGGS…MLVV, TVLS…LYMF, and YGVW…LVVL.

This sequence belongs to the complex I subunit 6 family. Core subunit of respiratory chain NADH dehydrogenase (Complex I) which is composed of 45 different subunits.

The protein resides in the mitochondrion inner membrane. The enzyme catalyses a ubiquinone + NADH + 5 H(+)(in) = a ubiquinol + NAD(+) + 4 H(+)(out). In terms of biological role, core subunit of the mitochondrial membrane respiratory chain NADH dehydrogenase (Complex I) which catalyzes electron transfer from NADH through the respiratory chain, using ubiquinone as an electron acceptor. Essential for the catalytic activity and assembly of complex I. The protein is NADH-ubiquinone oxidoreductase chain 6 (MT-ND6) of Rhinoceros unicornis (Greater Indian rhinoceros).